The sequence spans 661 residues: Ubiquitin-associated and SH3 domain-containing protein A (661 aa).

A UBA domain is found at 15-60 (KLKSRSSPSLLEPLLAMGFPVHTALKALAATGRKTAEEALAWLHDH). Residues 276 to 341 (VHYQTLRALF…PENYTDRASE (66 aa)) form the SH3 domain. The phosphatase-like stretch occupies residues 395-661 (RKSVLVVRHG…FNWRNWISGN (267 aa)).

As to quaternary structure, homodimer or homooligomer. Interacts with CBL. Part of a complex containing CBL and activated EGFR. Interacts with ubiquitin and with mono-ubiquitinated proteins. Interacts with dynamin. Highest expression of UBASH3A in tissues belonging to the immune system, including spleen, peripheral blood leukocytes, thymus and bone marrow.

The protein localises to the cytoplasm. Its subcellular location is the nucleus. Interferes with CBL-mediated down-regulation and degradation of receptor-type tyrosine kinases. Promotes accumulation of activated target receptors, such as T-cell receptors, EGFR and PDGFRB, on the cell surface. Exhibits negligible protein tyrosine phosphatase activity at neutral pH. May act as a dominant-negative regulator of UBASH3B-dependent dephosphorylation. May inhibit dynamin-dependent endocytic pathways by functionally sequestering dynamin via its SH3 domain. This Homo sapiens (Human) protein is Ubiquitin-associated and SH3 domain-containing protein A (UBASH3A).